The following is an 88-amino-acid chain: Putative membrane protein insertion efficiency factor (88 aa).

The disordered stretch occupies residues 68 to 88 (VPPPNSDTRARGEADARSHRL). The segment covering 75–88 (TRARGEADARSHRL) has biased composition (basic and acidic residues).

The protein belongs to the UPF0161 family.

It is found in the cell inner membrane. Its function is as follows. Could be involved in insertion of integral membrane proteins into the membrane. This chain is Putative membrane protein insertion efficiency factor, found in Burkholderia orbicola (strain MC0-3).